Reading from the N-terminus, the 124-residue chain is Glycine cleavage system H protein (124 aa).

The Lipoyl-binding domain maps to 22-104 (VATVGITEFA…YGAGWLFRVE (83 aa)). Lys63 carries the post-translational modification N6-lipoyllysine.

It belongs to the GcvH family. In terms of assembly, the glycine cleavage system is composed of four proteins: P, T, L and H. (R)-lipoate serves as cofactor.

In terms of biological role, the glycine cleavage system catalyzes the degradation of glycine. The H protein shuttles the methylamine group of glycine from the P protein to the T protein. The protein is Glycine cleavage system H protein of Beutenbergia cavernae (strain ATCC BAA-8 / DSM 12333 / CCUG 43141 / JCM 11478 / NBRC 16432 / NCIMB 13614 / HKI 0122).